The primary structure comprises 677 residues: Envelope glycoprotein (677 aa).

An N-terminal signal peptide occupies residues Met-1–Ser-33. The Extracellular segment spans residues Met-34–Gln-651. Asn-41 carries N-linked (GlcNAc...) asparagine; by host glycosylation. 5 cysteine pairs are disulfide-bonded: Cys-54-Cys-610, Cys-109-Cys-136, Cys-122-Cys-148, Cys-512-Cys-557, and Cys-602-Cys-609. The receptor-binding stretch occupies residues Arg-55 to Glu-202. Residues Asn-205, Asn-239, Asn-258, Asn-269, Asn-297, Asn-317, Asn-318, Asn-339, Asn-406, Asn-420, Asn-435, and Asn-463 are each glycosylated (N-linked (GlcNAc...) asparagine; by host). A mucin-like region region spans residues Asn-306–Thr-486. The span at His-315–Gly-326 shows a compositional bias: polar residues. Disordered regions lie at residues His-315–Pro-349, Asn-370–Phe-482, and Lys-489–Thr-508. Composition is skewed to polar residues over residues Asn-370–Glu-421 and Asn-429–Gly-472. The segment at Gly-525–Ala-540 is fusion peptide. Residues Leu-555–Gln-596 are a coiled coil. The N-linked (GlcNAc...) asparagine; by host glycan is linked to Asn-564. The stretch at Trp-616–Pro-635 forms a coiled coil. N-linked (GlcNAc...) asparagine; by host glycosylation occurs at Asn-619. The helical transmembrane segment at Trp-652 to Ile-672 threads the bilayer. Residues Cys-671 and Cys-673 are each lipidated (S-palmitoyl cysteine; by host). Residues Cys-673–Cys-677 lie on the Cytoplasmic side of the membrane.

The protein belongs to the filoviruses glycoprotein family. As to quaternary structure, homotrimer; each monomer consists of a GP1 and a GP2 subunit linked by disulfide bonds. The resulting peplomers (GP1,2) protrude from the virus surface as spikes. Interacts with host integrin alpha-V/ITGAV. Interacts with host CLEC10A. Binds also to host CD209 and CLEC4M/DC-SIGN(R). Interacts with host FOLR1. Interacts with BST2; this interaction inhibits the antiviral effect of BST2 and this allows viral release from infected cells. Interacts with host FCN1; this interaction enhances viral entry. Interacts with host TLR4; this interaction induces cell death in T-lymphocytes or proinflammatory cytokines and SOCS1 production in monocytes. Interacts with host entry receptor NPC1. In terms of assembly, GP1 and GP2delta are part of GP1,2delta soluble complexes released by ectodomain shedding. The signal peptide region modulates GP's high mannose glycosylation, thereby determining the efficiency of the interactions with DC-SIGN(R). In terms of processing, N-glycosylated. Post-translationally, O-glycosylated in the mucin-like region. Palmitoylation of GP2 is not required for its function. In terms of processing, specific enzymatic cleavages in vivo yield mature proteins. The precursor is processed into GP1 and GP2 by host cell furin in the trans Golgi, and maybe by other host proteases, to yield the mature GP1 and GP2 proteins. The cleavage site corresponds to the furin optimal cleavage sequence [KR]-X-[KR]-R. This cleavage does not seem to be required for function. After the internalization of the virus into cell endosomes, GP1 C-terminus is removed by the endosomal proteases cathepsin B, cathepsin L, or both, leaving a 19-kDa N-terminal fragment which is further digested by cathepsin B. Proteolytic processing of GP1,2 by host ADAM17 can remove the transmembrane anchor of GP2 and leads to shedding of complexes consisting in GP1 and truncated GP2 (GP1,2delta).

It localises to the virion membrane. The protein localises to the host cell membrane. Its subcellular location is the secreted. Functionally, trimeric GP1,2 complexes form the virion surface spikes and mediate the viral entry processes, with GP1 acting as the receptor-binding subunit and GP2 as the membrane fusion subunit. At later times of infection, down-regulates the expression of various host cell surface molecules that are essential for immune surveillance and cell adhesion. Down-modulates several integrins including ITGA1, ITGA2, ITGA3, ITGA4, ITGA5, ITGA6, ITGAV and ITGB1. This decrease in cell adhesion molecules may lead to cell detachment, contributing to the disruption of blood vessel integrity and hemorrhages developed during infection (cytotoxicity). Interacts with host TLR4 and thereby stimulates the differentiation and activation of monocytes leading to bystander death of T-lymphocytes. Down-regulates as well the function of host natural killer cells. Counteracts the antiviral effect of host BST2/tetherin that restricts release of progeny virions from infected cells. However, cooperates with VP40 and host BST2 to activate canonical NF-kappa-B pathway in a manner dependent on neddylation. In terms of biological role, functions as a decoy for anti-GP1,2 antibodies thereby contributing to viral immune evasion. Interacts and activates host macrophages and dendritic cells inducing up-regulation of cytokine transcription. This effect is mediated throught activation of host TLR4. Its function is as follows. Responsible for binding to the receptor(s) on target cells. Interacts with CD209/DC-SIGN and CLEC4M/DC-SIGNR which act as cofactors for virus entry into dendritic cells (DCs) and endothelial cells. Binding to the macrophage specific lectin CLEC10A also seems to enhance virus infectivity. Interaction with FOLR1/folate receptor alpha may be a cofactor for virus entry in some cell types, although results are contradictory. Members of the Tyro3 receptor tyrosine kinase family also seem to be cell entry factors in filovirus infection. Once attached, the virions are internalized through clathrin-dependent endocytosis and/or macropinocytosis. After internalization of the virus into the endosomes of the host cell, proteolysis of GP1 by two cysteine proteases, CTSB/cathepsin B and CTSL/cathepsin L removes the glycan cap and allows GP1 binding to the host entry receptor NPC1. NPC1-binding, Ca(2+) and acidic pH induce a conformational change of GP2, which unmasks its fusion peptide and permit membranes fusion. Acts as a class I viral fusion protein. Under the current model, the protein has at least 3 conformational states: pre-fusion native state, pre-hairpin intermediate state, and post-fusion hairpin state. During viral and target cell membrane fusion, the coiled coil regions (heptad repeats) assume a trimer-of-hairpins structure, positioning the fusion peptide in close proximity to the C-terminal region of the ectodomain. The formation of this structure appears to drive apposition and subsequent fusion of viral and target cell membranes. Responsible for penetration of the virus into the cell cytoplasm by mediating the fusion of the membrane of the endocytosed virus particle with the endosomal membrane. Low pH in endosomes induces an irreversible conformational change in GP2, releasing the fusion hydrophobic peptide. The sequence is that of Envelope glycoprotein (GP) from Homo sapiens (Human).